A 525-amino-acid polypeptide reads, in one-letter code: GMP synthase [glutamine-hydrolyzing] (525 aa).

One can recognise a Glutamine amidotransferase type-1 domain in the interval 9-207 (RILILDFGSQ…VRDICQCEAL (199 aa)). The active-site Nucleophile is Cys86. Residues His181 and Glu183 contribute to the active site. In terms of domain architecture, GMPS ATP-PPase spans 208–400 (WTPAKIIDDA…LGLPYDMLYR (193 aa)). 235–241 (SGGVDSS) is an ATP binding site.

In terms of assembly, homodimer.

The enzyme catalyses XMP + L-glutamine + ATP + H2O = GMP + L-glutamate + AMP + diphosphate + 2 H(+). It participates in purine metabolism; GMP biosynthesis; GMP from XMP (L-Gln route): step 1/1. Its function is as follows. Catalyzes the synthesis of GMP from XMP. This is GMP synthase [glutamine-hydrolyzing] from Shigella flexneri serotype 5b (strain 8401).